Consider the following 79-residue polypeptide: EAMZP30-47 protein (79 aa).

Residues 1–12 (HAASPRGRPQQR) show a composition bias toward low complexity. The interval 1–47 (HAASPRGRPQQRSSRHGAEGPDTTRRGSCCSSSSSCCRPSTPRHPHN) is disordered. The span at 16 to 25 (HGAEGPDTTR) shows a compositional bias: basic and acidic residues. A compositionally biased stretch (low complexity) spans 28–37 (SCCSSSSSCC).

Its subcellular location is the membrane. It localises to the cell membrane. The protein resides in the cytoplasmic vesicle. The protein localises to the secretory vesicle. It is found in the rhoptry. This chain is EAMZP30-47 protein (CMC17), found in Eimeria acervulina (Coccidian parasite).